The sequence spans 307 residues: Putative ankyrin repeat protein R229 (307 aa).

ANK repeat units lie at residues 135 to 164 (ASRV…DINV), 165 to 194 (DNDK…NVHA), 196 to 224 (DDEA…NVNA), 226 to 254 (NDYA…NPMA), 256 to 284 (RYYP…SMVY), and 286 to 307 (SYAM…LLLD).

The sequence is that of Putative ankyrin repeat protein R229 from Acanthamoeba polyphaga (Amoeba).